A 190-amino-acid polypeptide reads, in one-letter code: B3 domain-containing protein Os02g0764100 (190 aa).

Residues 17 to 121 constitute a DNA-binding region (TF-B3); that stretch reads FEKAVTPSDV…KLLFIDCKKN (105 aa).

It is found in the nucleus. The protein is B3 domain-containing protein Os02g0764100 of Oryza sativa subsp. japonica (Rice).